We begin with the raw amino-acid sequence, 937 residues long: Diacylglycerol kinase theta (937 aa).

Residues 1-48 (MATAAESGARTWPGSGSPRLGSPAGSPVLGISGRARPGSGPERTGRAI) are disordered. Phosphoserine occurs at positions 22 and 26. 3 Phorbol-ester/DAG-type zinc fingers span residues 54–102 (GHSF…KTPC), 115–162 (AHCF…CSDC), and 177–228 (HHHW…TPEC). Positions 359-378 (GKAGTTEEETSKDSGPGDSV) are disordered. The 100-residue stretch at 390 to 489 (TQEILKIYPD…TRFYVAEARA (100 aa)) folds into the Ras-associating domain. 2 short sequence motifs (LXXLL motif) span residues 550–554 (LYMLA) and 569–573 (LPDVL). Residues 579–716 (PDCCPLLVFV…MDRWTILLDA (138 aa)) form the DAGKc domain. The tract at residues 911–937 (AKQKPRKAGAIRDTRVDTLPAPEGNPL) is disordered.

The protein belongs to the eukaryotic diacylglycerol kinase family. In terms of assembly, interacts with RHOA (constitutively activated, GTP-bound); the interaction inhibits DGKQ. Interacts with PRKCE. Interacts with PRKCH. Interacts with PLCB1. Interacts with NR5A1; the interaction requires both LXXLL motifs in DGKQ and is required for full phosphatidic acid-mediated activation of NR5A1. Post-translationally, phosphorylated by PRKCE and PRKCH in vitro. Widely expressed with higher expression in the brain and, to a lesser extent, in the small intestine, duodenum, and liver. In brain, expressed in gray matter. Expression is most intense in the cerebellar cortex and hippocampus, while moderate expression is seen in the olfactory bulb neuronal layers and brain stem nuclei. In the cerebellar cortex, equally expressed in both the Purkinje cell somata and the granule cells.

It localises to the cytoplasm. The protein localises to the cytosol. The protein resides in the cell membrane. Its subcellular location is the synapse. It is found in the cytoskeleton. It localises to the nucleus. The protein localises to the nucleus speckle. The protein resides in the nucleus matrix. It carries out the reaction a 1,2-diacyl-sn-glycerol + ATP = a 1,2-diacyl-sn-glycero-3-phosphate + ADP + H(+). The catalysed reaction is a 1-O-alkyl-sn-glycerol + ATP = a 1-O-alkyl-sn-glycero-3-phosphate + ADP + H(+). The enzyme catalyses 1-O-alkyl-2-acyl-sn-glycerol + ATP = 1-O-alkyl-2-acyl-sn-glycero-3-phosphate + ADP + H(+). It catalyses the reaction 1,2-di-(9Z-octadecenoyl)-sn-glycerol + ATP = 1,2-di-(9Z-octadecenoyl)-sn-glycero-3-phosphate + ADP + H(+). It carries out the reaction 1-O-hexadecyl-sn-glycerol + ATP = 1-O-hexadecyl-sn-glycero-3-phosphate + ADP + H(+). The catalysed reaction is 1-O-hexadecyl-2-acetyl-sn-glycerol + ATP = 1-O-hexadecyl-2-acetyl-sn-glycero-3-phosphate + ADP + H(+). The enzyme catalyses 1-octadecanoyl-2-(5Z,8Z,11Z,14Z-eicosatetraenoyl)-sn-glycerol + ATP = 1-octadecanoyl-2-(5Z,8Z,11Z,14Z-eicosatetraenoyl)-sn-glycero-3-phosphate + ADP + H(+). The protein operates within lipid metabolism; glycerolipid metabolism. Activated by phosphatidylserine. Functionally, diacylglycerol kinase that converts diacylglycerol/DAG into phosphatidic acid/phosphatidate/PA and regulates the respective levels of these two bioactive lipids. Thereby, acts as a central switch between the signaling pathways activated by these second messengers with different cellular targets and opposite effects in numerous biological processes. Within the adrenocorticotropic hormone signaling pathway, produces phosphatidic acid which in turn activates NR5A1 and subsequent steroidogenic gene transcription. Also functions downstream of the nerve growth factor signaling pathway being specifically activated in the nucleus by the growth factor. Through its diacylglycerol activity also regulates synaptic vesicle endocytosis. The sequence is that of Diacylglycerol kinase theta from Rattus norvegicus (Rat).